The following is a 613-amino-acid chain: DNA mismatch repair protein MutL (613 aa).

It belongs to the DNA mismatch repair MutL/HexB family.

Functionally, this protein is involved in the repair of mismatches in DNA. It is required for dam-dependent methyl-directed DNA mismatch repair. May act as a 'molecular matchmaker', a protein that promotes the formation of a stable complex between two or more DNA-binding proteins in an ATP-dependent manner without itself being part of a final effector complex. The polypeptide is DNA mismatch repair protein MutL (Bradyrhizobium sp. (strain ORS 278)).